Reading from the N-terminus, the 397-residue chain is Dual specificity mitogen-activated protein kinase kinase 2 (397 aa).

The disordered stretch occupies residues 1-21; the sequence is MAPKRRPVPLIIAPTGEGQST. The region spanning 69–366 is the Protein kinase domain; it reads FDPICELGAG…LKMLMGHTFI (298 aa). ATP-binding positions include 75–83 and K98; that span reads LGAGNGGVV. D191 serves as the catalytic Proton acceptor. Phosphoserine; by RAF is present on residues S219 and S223. The disordered stretch occupies residues 284–306; it reads GGAEGHSMSPRQRPPGRPVSGHG.

It belongs to the protein kinase superfamily. STE Ser/Thr protein kinase family. MAP kinase kinase subfamily. Phosphorylation on Ser/Thr by MAP kinase kinase kinases (RAF) positively regulates the kinase activity.

It catalyses the reaction L-seryl-[protein] + ATP = O-phospho-L-seryl-[protein] + ADP + H(+). The catalysed reaction is L-threonyl-[protein] + ATP = O-phospho-L-threonyl-[protein] + ADP + H(+). The enzyme catalyses L-tyrosyl-[protein] + ATP = O-phospho-L-tyrosyl-[protein] + ADP + H(+). Functionally, catalyzes the concomitant phosphorylation of a threonine and a tyrosine residue in a Thr-Glu-Tyr sequence located in MAP kinases. The sequence is that of Dual specificity mitogen-activated protein kinase kinase 2 (map2k2) from Cyprinus carpio (Common carp).